The sequence spans 515 residues: Zinc metalloproteinase-disintegrin BA-5A (515 aa).

The N-terminal stretch at 1–20 is a signal peptide; that stretch reads MMQVLLVTICLAVFPYQGSS. Positions 21–193 are excised as a propeptide; that stretch reads IILESGNVND…KEASQLVATS (173 aa). Residues 203-399 form the Peptidase M12B domain; sequence RYIKYFIVVD…YKPDCTLIRP (197 aa). An N-linked (GlcNAc...) asparagine glycan is attached at N263. 11 cysteine pairs are disulfide-bonded: C314–C394, C354–C378, C356–C361, C410–C429, C421–C439, C423–C434, C433–C456, C447–C453, C452–C478, C465–C485, and C472–C497. H339 contacts Zn(2+). E340 is an active-site residue. Residues H343 and H349 each coordinate Zn(2+). N-linked (GlcNAc...) asparagine glycosylation is present at N377. The region spanning 407–493 is the Disintegrin domain; the sequence is PPVCGNDILE…DCPIDHFHRN (87 aa). The D/ECD-tripeptide signature appears at 471–473; that stretch reads ECD.

It belongs to the venom metalloproteinase (M12B) family. P-II subfamily. As to quaternary structure, monomer. Zn(2+) serves as cofactor. In terms of tissue distribution, expressed by the venom gland.

The protein resides in the secreted. Functionally, snake venom zinc metalloprotease that possesses hemorrhagic activity and degrades alpha chain of fibrinogen (FGA). May inhibit alpha-2/beta-1 integrin (ITGA2/ITGB1). The chain is Zinc metalloproteinase-disintegrin BA-5A from Bitis arietans (African puff adder).